The following is a 105-amino-acid chain: Urease subunit beta (105 aa).

Belongs to the urease beta subunit family. In terms of assembly, heterotrimer of UreA (gamma), UreB (beta) and UreC (alpha) subunits. Three heterotrimers associate to form the active enzyme.

It is found in the cytoplasm. It catalyses the reaction urea + 2 H2O + H(+) = hydrogencarbonate + 2 NH4(+). The protein operates within nitrogen metabolism; urea degradation; CO(2) and NH(3) from urea (urease route): step 1/1. The protein is Urease subunit beta of Pseudomonas putida (strain ATCC 47054 / DSM 6125 / CFBP 8728 / NCIMB 11950 / KT2440).